Consider the following 1316-residue polypeptide: DNA-directed RNA polymerase subunit beta' (1316 aa).

Positions 60, 62, 75, and 78 each coordinate Zn(2+). Aspartate 535, aspartate 537, and aspartate 539 together coordinate Mg(2+). Residues cysteine 891, cysteine 968, cysteine 975, and cysteine 978 each contribute to the Zn(2+) site.

Belongs to the RNA polymerase beta' chain family. In terms of assembly, the RNAP catalytic core consists of 2 alpha, 1 beta, 1 beta' and 1 omega subunit. When a sigma factor is associated with the core the holoenzyme is formed, which can initiate transcription. Requires Mg(2+) as cofactor. Zn(2+) serves as cofactor.

It carries out the reaction RNA(n) + a ribonucleoside 5'-triphosphate = RNA(n+1) + diphosphate. Functionally, DNA-dependent RNA polymerase catalyzes the transcription of DNA into RNA using the four ribonucleoside triphosphates as substrates. The polypeptide is DNA-directed RNA polymerase subunit beta' (Mycobacterium leprae (strain Br4923)).